We begin with the raw amino-acid sequence, 321 residues long: Peptide transport system permease protein SapB (321 aa).

The Cytoplasmic segment spans residues 1-8; it reads MIIFTLRR. The helical transmembrane segment at 9–29 threads the bilayer; that stretch reads LLLLLVTLFFLTFIGFSLSYF. Over 30–80 the chain is Periplasmic; it reads TPHAPLQGASLWNAWVFWFNGLLHWDFGVSSINGQLISEQLKEVFPATMEL. Positions 74–302 constitute an ABC transmembrane type-1 domain; the sequence is FPATMELCIL…SLVIVVNVIS (229 aa). Residues 81 to 101 traverse the membrane as a helical segment; sequence CILAFGFALMVGIPVGMLAGV. Residues 102–113 lie on the Cytoplasmic side of the membrane; it reads TRSKWPDRFISA. A helical membrane pass occupies residues 114–134; that stretch reads LALLGFSIPVFWLALLLTLFF. Over 135–174 the chain is Periplasmic; the sequence is SLTLGWLPVSGRFDLLYEVKPVTGFAIIDAWISDSPWRDE. Residues 175–195 traverse the membrane as a helical segment; it reads MVMSAIRHMVLPVLTLSVAPT. Over 196–248 the chain is Cytoplasmic; that stretch reads TEVIRLMRISTIEVYDQNYVKAAATRGLSRFTILRRHVLHNALPPVIPRLGLQ. A helical membrane pass occupies residues 249 to 269; sequence FSTMLTLAMITEMVFSWPGLG. The Periplasmic portion of the chain corresponds to 270-280; that stretch reads RWLIHAIRQQD. A helical membrane pass occupies residues 281 to 301; the sequence is YAAISAGVMVIGSLVIVVNVI. At 302-321 the chain is on the cytoplasmic side; the sequence is SDILGAMANPLKHKEWYALR.

Belongs to the binding-protein-dependent transport system permease family. OppBC subfamily.

It is found in the cell inner membrane. In terms of biological role, involved in a peptide intake transport system that plays a role in the resistance to antimicrobial peptides. The protein is Peptide transport system permease protein SapB of Salmonella typhimurium (strain LT2 / SGSC1412 / ATCC 700720).